A 279-amino-acid polypeptide reads, in one-letter code: Inorganic pyrophosphatase (279 aa).

Arg-100 lines the diphosphate pocket. Positions 132, 137, and 169 each coordinate Mg(2+).

The protein belongs to the PPase family. It depends on Mg(2+) as a cofactor.

It catalyses the reaction diphosphate + H2O = 2 phosphate + H(+). This chain is Inorganic pyrophosphatase (ppa1), found in Dictyostelium discoideum (Social amoeba).